Reading from the N-terminus, the 622-residue chain is Palmitoyltransferase pfa3 (622 aa).

Residues M1 to C38 lie on the Cytoplasmic side of the membrane. Residues T39–V59 traverse the membrane as a helical segment. Topologically, residues D60–S76 are vacuolar. The chain crosses the membrane as a helical span at residues Y77 to F97. The Cytoplasmic segment spans residues T98–K175. In terms of domain architecture, DHHC spans R132–I182. A helical membrane pass occupies residues A176 to A196. Over S197–N217 the chain is Vacuolar. Residues Y218–W238 traverse the membrane as a helical segment. The Cytoplasmic segment spans residues H239–D622. 3 disordered regions span residues P298–A334, R419–D507, and D533–D622. A compositionally biased stretch (basic and acidic residues) spans R302–R311. Positions T313–P330 are enriched in polar residues. Basic and acidic residues predominate over residues R419–Q428. A compositionally biased stretch (polar residues) spans Y443–P455. Positions P466–R488 are enriched in low complexity. The span at D533–F547 shows a compositional bias: acidic residues. Residues N610–D622 show a composition bias toward basic and acidic residues.

This sequence belongs to the DHHC palmitoyltransferase family. PFA3 subfamily. Autopalmitoylated.

It is found in the vacuole membrane. The enzyme catalyses L-cysteinyl-[protein] + hexadecanoyl-CoA = S-hexadecanoyl-L-cysteinyl-[protein] + CoA. In terms of biological role, palmitoyltransferase specific for vac8. Palmitoylates vac8 at one or more of its N-terminal cysteine residues, which is required for its proper membrane localization. This chain is Palmitoyltransferase pfa3 (ptr-3), found in Neurospora crassa (strain ATCC 24698 / 74-OR23-1A / CBS 708.71 / DSM 1257 / FGSC 987).